The primary structure comprises 520 residues: Cyclic AMP-responsive element-binding protein 3-like protein 2 (520 aa).

Topologically, residues 1–378 (MEVLESGEQG…CKLAGTQTGT (378 aa)) are cytoplasmic. Position 93 is a phosphoserine (S93). K178 is covalently cross-linked (Glycyl lysine isopeptide (Lys-Gly) (interchain with G-Cter in SUMO2)). The residue at position 191 (S191) is a Phosphoserine. The interval 195 to 264 (APVDHLHLPP…PHKLQGSGPL (70 aa)) is disordered. 2 stretches are compositionally biased toward low complexity: residues 208–220 (SSHGSDSEGSLSP) and 234–255 (SPSRAAPRAPSALSSSPLLTAP). A bZIP domain is found at 294–357 (ALKKIRRKIK…RTLLQQLQKL (64 aa)). The tract at residues 296 to 325 (KKIRRKIKNKISAQESRRKKKEYMDSLEKK) is basic motif. The tract at residues 336-357 (LRKKVEVLENTNRTLLQQLQKL) is leucine-zipper. The chain crosses the membrane as a helical; Signal-anchor for type II membrane protein span at residues 379 to 399 (CLMVVVLCFAVAFGSFFQGYG). Residues 400–520 (PYPSATKMAL…ELDRRVNTTF (121 aa)) are Lumenal-facing. Positions 427–430 (RNLL) match the S1P recognition motif. N-linked (GlcNAc...) asparagine glycans are attached at residues N480, N504, and N517.

This sequence belongs to the bZIP family. ATF subfamily. In terms of assembly, binds DNA as a dimer. Post-translationally, upon ER stress, translocated to the Golgi apparatus, where it is processed by regulated intramembrane proteolysis (RIP) to release the cytosol-facing N-terminal transcription factor domain. The cleavage is performed sequentially by site-1 and site-2 proteases (S1P/MBTPS1 and S2P/MBTPS2). In terms of processing, N-glycosylated. Ubiquitinated by HRD1/SYVN1; undergoes 'Lys-48'-linked ubiquitination, followed by rapid proteasomal degradation under normal conditions. Upon ER stress, SYVN1 E3 ubiquitin-protein ligase dissociates from its substrate, ubiquitination does not occur and CREB3L2 is stabilized.

Its subcellular location is the endoplasmic reticulum membrane. It is found in the nucleus. Its function is as follows. Transcription factor involved in unfolded protein response (UPR). In the absence of endoplasmic reticulum (ER) stress, inserted into ER membranes, with N-terminal DNA-binding and transcription activation domains oriented toward the cytosolic face of the membrane. In response to ER stress, transported to the Golgi, where it is cleaved in a site-specific manner by resident proteases S1P/MBTPS1 and S2P/MBTPS2. The released N-terminal cytosolic domain is translocated to the nucleus to effect transcription of specific target genes. Plays a critical role in chondrogenesis by activating the transcription of SEC23A, which promotes the transport and secretion of cartilage matrix proteins, and possibly that of ER biogenesis-related genes. In a neuroblastoma cell line, protects cells from ER stress-induced death. In vitro activates transcription of target genes via direct binding to the CRE site. The chain is Cyclic AMP-responsive element-binding protein 3-like protein 2 (CREB3L2) from Pongo abelii (Sumatran orangutan).